Reading from the N-terminus, the 353-residue chain is Abasic site processing protein HMCES (353 aa).

C2 (nucleophile) is an active-site residue. C2 is subject to Thiazolidine linkage to a ring-opened DNA abasic site. The active site involves E127. Glycyl lysine isopeptide (Lys-Gly) (interchain with G-Cter in SUMO2) cross-links involve residues K148 and K151. S160 bears the Phosphoserine mark. Glycyl lysine isopeptide (Lys-Gly) (interchain with G-Cter in SUMO2) cross-links involve residues K274 and K275. The tract at residues 292–353 (TKSPKKEVPD…DEPMAKKPNS (62 aa)) is disordered. Residue S294 is modified to Phosphoserine. Positions 295-307 (PKKEVPDSPKKDA) are enriched in basic and acidic residues. K305 participates in a covalent cross-link: Glycyl lysine isopeptide (Lys-Gly) (interchain with G-Cter in SUMO2). S321 is subject to Phosphoserine. Residues 332–338 (SFLDRWL) carry the PIP-box motif. Residues 336–353 (RWLKQEKEDEPMAKKPNS) are compositionally biased toward basic and acidic residues. Residues K339 and K342 each participate in a glycyl lysine isopeptide (Lys-Gly) (interchain with G-Cter in SUMO2) cross-link.

The protein belongs to the SOS response-associated peptidase family. Interacts (via PIP-box motif) with PCNA. As to expression, expressed in embryonic stem cells.

Its subcellular location is the chromosome. Its activity is regulated as follows. Formation and reversal of DNA-protein cross-link depends on DNA context. Catalyzes formation of the thiazolidine linkage in presence of abasic sites in single-stranded DNA. Mediates the reversal of the thiazolidine cross-link in presence of double stranded DNA. Sensor of abasic sites in single-stranded DNA (ssDNA) required to preserve genome integrity by promoting error-free repair of abasic sites. Acts as an enzyme that recognizes and binds abasic sites in ssDNA at replication forks and chemically modifies the lesion by forming a covalent cross-link with DNA: forms a stable thiazolidine linkage between a ring-opened abasic site and the alpha-amino and sulfhydryl substituents of its N-terminal catalytic cysteine residue. Promotes error-free repair by protecting abasic sites from translesion synthesis (TLS) polymerases and endonucleases that are error-prone and would generate mutations and double-strand breaks. The HMCES DNA-protein cross-link is then either reversed or degraded. HMCES is able to catalyze the reversal of its thiazolidine cross-link and cycle between a cross-link and a non-cross-linked state depending on DNA context: mediates self-reversal of the thiazolidine cross-link in double stranded DNA, allowing APEX1 to initiate downstream repair of abasic sites. The HMCES DNA-protein cross-link can also be degraded by the SPRTN metalloprotease following unfolding by the BRIP1/FANCJ helicase. Has preference for ssDNA, but can also accommodate double-stranded DNA with 3' or 5' overhang (dsDNA), and dsDNA-ssDNA 3' junction. Plays a protective role during somatic hypermutation of immunoglobulin genes in B-cells: acts via its ability to form covalent cross-links with abasic sites, thereby limiting the accumulation of deletions in somatic hypermutation target regions. Also involved in class switch recombination (CSR) in B-cells independently of the formation of a DNA-protein cross-link: acts by binding and protecting ssDNA overhangs to promote DNA double-strand break repair through the microhomology-mediated alternative-end-joining (Alt-EJ) pathway. Acts as a protease: mediates autocatalytic processing of its N-terminal methionine in order to expose the catalytic cysteine. The chain is Abasic site processing protein HMCES from Mus musculus (Mouse).